The chain runs to 371 residues: Leucine-rich repeat-containing protein 2 (371 aa).

9 LRR repeats span residues 122–143 (HLRE…IQLF), 145–166 (AMRI…IGCL), 168–189 (NLKE…LGDC), 191–214 (NLER…SNLK), 215–235 (QVTF…CVLR), 238–260 (NLQW…DRLE), 261–283 (ELQS…LNLK), 284–305 (KLTL…LCDS), and 308–329 (PLKF…DGNE).

The polypeptide is Leucine-rich repeat-containing protein 2 (LRRC2) (Homo sapiens (Human)).